The primary structure comprises 336 residues: Ribosomal RNA large subunit methyltransferase F (336 aa).

This sequence belongs to the methyltransferase superfamily. METTL16/RlmF family.

It localises to the cytoplasm. It catalyses the reaction adenosine(1618) in 23S rRNA + S-adenosyl-L-methionine = N(6)-methyladenosine(1618) in 23S rRNA + S-adenosyl-L-homocysteine + H(+). Specifically methylates the adenine in position 1618 of 23S rRNA. This chain is Ribosomal RNA large subunit methyltransferase F, found in Yersinia pestis bv. Antiqua (strain Angola).